The sequence spans 319 residues: Aspartate carbamoyltransferase catalytic subunit (319 aa).

Residues arginine 54 and threonine 55 each coordinate carbamoyl phosphate. Residue lysine 82 participates in L-aspartate binding. The carbamoyl phosphate site is built by arginine 104, histidine 134, and glutamine 137. The L-aspartate site is built by arginine 171 and arginine 227. Carbamoyl phosphate-binding residues include glycine 271 and proline 272.

It belongs to the aspartate/ornithine carbamoyltransferase superfamily. ATCase family. Heterododecamer (2C3:3R2) of six catalytic PyrB chains organized as two trimers (C3), and six regulatory PyrI chains organized as three dimers (R2).

The enzyme catalyses carbamoyl phosphate + L-aspartate = N-carbamoyl-L-aspartate + phosphate + H(+). Its pathway is pyrimidine metabolism; UMP biosynthesis via de novo pathway; (S)-dihydroorotate from bicarbonate: step 2/3. Its function is as follows. Catalyzes the condensation of carbamoyl phosphate and aspartate to form carbamoyl aspartate and inorganic phosphate, the committed step in the de novo pyrimidine nucleotide biosynthesis pathway. The protein is Aspartate carbamoyltransferase catalytic subunit of Kineococcus radiotolerans (strain ATCC BAA-149 / DSM 14245 / SRS30216).